The primary structure comprises 389 residues: Formate-dependent phosphoribosylglycinamide formyltransferase (389 aa).

Residues 21–22 (EL) and glutamate 81 each bind N(1)-(5-phospho-beta-D-ribosyl)glycinamide. Residues arginine 113, lysine 154, 159 to 164 (SSGKGQ), 194 to 197 (EEFI), and glutamate 202 each bind ATP. An ATP-grasp domain is found at 118–307 (RLAAEKLGLK…EFEIHVRAIL (190 aa)). Residues glutamate 266 and glutamate 278 each contribute to the Mg(2+) site. Residues aspartate 285, lysine 353, and 360–361 (RR) each bind N(1)-(5-phospho-beta-D-ribosyl)glycinamide.

The protein belongs to the PurK/PurT family. As to quaternary structure, homodimer.

The enzyme catalyses N(1)-(5-phospho-beta-D-ribosyl)glycinamide + formate + ATP = N(2)-formyl-N(1)-(5-phospho-beta-D-ribosyl)glycinamide + ADP + phosphate + H(+). The protein operates within purine metabolism; IMP biosynthesis via de novo pathway; N(2)-formyl-N(1)-(5-phospho-D-ribosyl)glycinamide from N(1)-(5-phospho-D-ribosyl)glycinamide (formate route): step 1/1. Involved in the de novo purine biosynthesis. Catalyzes the transfer of formate to 5-phospho-ribosyl-glycinamide (GAR), producing 5-phospho-ribosyl-N-formylglycinamide (FGAR). Formate is provided by PurU via hydrolysis of 10-formyl-tetrahydrofolate. The chain is Formate-dependent phosphoribosylglycinamide formyltransferase from Methanocaldococcus jannaschii (strain ATCC 43067 / DSM 2661 / JAL-1 / JCM 10045 / NBRC 100440) (Methanococcus jannaschii).